The following is a 366-amino-acid chain: G kinase-anchoring protein 1 (366 aa).

Residues 1–95 (MASAVLSSVP…SHAVCNAQHD (95 aa)) form an interaction with IRS1 region. Disordered stretches follow at residues 20 to 110 (QVDS…REEN) and 147 to 177 (EYED…DRPL). 3 positions are modified to phosphoserine: Ser-23, Ser-25, and Ser-27. Over residues 39–50 (TGKSQTLGSKST) the composition is skewed to polar residues. The stretch at 47–77 (SKSTTNEKKREKRRKKKEQQQSEANELRNLA) forms a coiled coil. The residue at position 106 (Ser-106) is a Phosphoserine; by PKG. Coiled-coil stretches lie at residues 128-160 (ADLE…QSKV) and 243-353 (EHNQ…YQGG).

Belongs to the GKAP1 family. Interacts with PRKG1 and IRS1.

Its subcellular location is the golgi apparatus. In terms of biological role, regulates insulin-dependent IRS1 tyrosine phosphorylation in adipocytes by modulating the availability of IRS1 to IR tyrosine kinase. Its association with IRS1 is required for insulin-induced translocation of SLC2A4 to the cell membrane. Involved in TNF-induced impairment of insulin-dependent IRS1 tyrosine phosphorylation. The protein is G kinase-anchoring protein 1 (GKAP1) of Homo sapiens (Human).